Reading from the N-terminus, the 408-residue chain is Putative mannan endo-1,4-beta-mannosidase 4 (408 aa).

The N-terminal stretch at 1–23 is a signal peptide; that stretch reads MKCLCFIVLLAIVIAQSYVGVEA. An N-linked (GlcNAc...) asparagine glycan is attached at asparagine 73. Substrate is bound by residues tryptophan 85 and asparagine 201. Catalysis depends on glutamate 202, which acts as the Proton donor. Catalysis depends on glutamate 322, which acts as the Nucleophile. Residue tryptophan 364 participates in substrate binding.

The protein belongs to the glycosyl hydrolase 5 (cellulase A) family.

Its subcellular location is the secreted. It carries out the reaction Random hydrolysis of (1-&gt;4)-beta-D-mannosidic linkages in mannans, galactomannans and glucomannans.. The polypeptide is Putative mannan endo-1,4-beta-mannosidase 4 (MAN4) (Arabidopsis thaliana (Mouse-ear cress)).